Here is a 469-residue protein sequence, read N- to C-terminus: Pancreatic lipase-related protein 2 (469 aa).

The first 17 residues, methionine 1 to glycine 17, serve as a signal peptide directing secretion. The cysteines at positions 21 and 27 are disulfide-linked. N-linked (GlcNAc...) asparagine glycosylation occurs at asparagine 71. Positions isoleucine 93 to proline 105 are required for galactolipase activity. Cysteine 109 and cysteine 120 are oxidised to a cystine. Serine 171 functions as the Nucleophile in the catalytic mechanism. The Charge relay system role is filled by aspartate 195. The Ca(2+) site is built by glutamate 206, arginine 209, aspartate 211, and aspartate 214. Residues cysteine 256 and cysteine 280 are joined by a disulfide bond. Positions glutamine 257 to alanine 279 are required for galactolipase activity. The active-site Charge relay system is the histidine 282. Cystine bridges form between cysteine 304–cysteine 315 and cysteine 318–cysteine 323. 3 N-linked (GlcNAc...) asparagine glycosylation sites follow: asparagine 353, asparagine 399, and asparagine 455. The 113-residue stretch at tryptophan 357–cysteine 469 folds into the PLAT domain. A disulfide bridge links cysteine 453 with cysteine 469.

Belongs to the AB hydrolase superfamily. Lipase family.

It is found in the secreted. The protein resides in the zymogen granule membrane. The protein localises to the cell projection. Its subcellular location is the neuron projection. It carries out the reaction a triacylglycerol + H2O = a diacylglycerol + a fatty acid + H(+). It catalyses the reaction a 1,2-diacyl-3-O-(beta-D-galactosyl)-sn-glycerol + 2 H2O = 3-beta-D-galactosyl-sn-glycerol + 2 a fatty acid + 2 H(+). The enzyme catalyses 1,2,3-tri-(9Z-octadecenoyl)-glycerol + H2O = di-(9Z)-octadecenoylglycerol + (9Z)-octadecenoate + H(+). The catalysed reaction is di-(9Z)-octadecenoylglycerol + H2O = (9Z-octadecenoyl)-glycerol + (9Z)-octadecenoate + H(+). It carries out the reaction (9Z-octadecenoyl)-glycerol + H2O = glycerol + (9Z)-octadecenoate + H(+). It catalyses the reaction 1-(9Z-octadecenoyl)-glycerol + H2O = glycerol + (9Z)-octadecenoate + H(+). The enzyme catalyses 1,2,3-tripropanoylglycerol + H2O = dipropanoylglycerol + propanoate + H(+). The catalysed reaction is 1,2,3-tributanoylglycerol + H2O = dibutanoylglycerol + butanoate + H(+). It carries out the reaction 1,2,3-trioctanoylglycerol + H2O = dioctanoylglycerol + octanoate + H(+). It catalyses the reaction 1,2-didecanoylglycerol + H2O = decanoylglycerol + decanoate + H(+). The enzyme catalyses long chain 1,2-diacyl-3-O-beta-D-galactosyl-sn-glycerol + H2O = long chain acyl-3-O-beta-D-galactosyl-sn-glycerol + a fatty acid + H(+). The catalysed reaction is 1,2-dioctanoyl-3-O-beta-D-galactosyl-sn-glycerol + H2O = octanoyl-3-(beta-D-galactosyl)-sn-glycerol + octanoate + H(+). It carries out the reaction 1,2-didodecanoyl-3-beta-D-galactosyl-sn-glycerol + H2O = dodecanoyl-3-beta-D-galactosyl-sn-glycerol + dodecanoate + H(+). It catalyses the reaction 1-beta-D-galactosyl-2,3-didodecanoyl-sn-glycerol + H2O = 1-beta-D-galactosyl-dodecanoyl-sn-glycerol + dodecanoate + H(+). The enzyme catalyses a 1,2-diacyl-3-O-[alpha-D-galactosyl-(1-&gt;6)-beta-D-galactosyl]-sn-glycerol + H2O = acyl-3-O-[alpha-D-galactosyl-(1-&gt;6)-beta-D-galactosyl]-sn-glycerol + a fatty acid + H(+). The catalysed reaction is long chain 1,2-diacyl-3-O-[alpha-D-galactosyl-(1-&gt;6)-beta-D-galactosyl]-sn-glycerol + H2O = long chain acyl-3-O-[alpha-D-galactosyl-(1-&gt;6)-beta-D-galactosyl]-sn-glycerol + a fatty acid + H(+). It carries out the reaction 1,2-dioctanoyl-3-O-[alpha-D-galactosyl-(1-&gt;6)-beta-D-galactosyl]-sn-glycerol + H2O = octanoyl-3-O-[alpha-D-galactosyl-(1-&gt;6)-beta-D-galactosyl]-sn-glycerol + octanoate + H(+). It catalyses the reaction 1,2-didodecanoyl-3-O-[alpha-D-galactosyl-(1-&gt;6)-beta-D-galactosyl]-sn-glycerol + H2O = dodecanoyl-3-O-[alpha-D-galactosyl-(1-&gt;6)-beta-D-galactosyl]-sn-glycerol + dodecanoate + H(+). The enzyme catalyses a 1,2-diacyl-sn-glycero-3-phosphocholine + H2O = a monoacyl-sn-glycero-3-phosphocholine + a fatty acid + H(+). It participates in glycerolipid metabolism; triacylglycerol degradation. Its pathway is glycolipid metabolism. In terms of biological role, lipase that primarily hydrolyzes triglycerides and galactosylglycerides. In neonates, may play a major role in pancreatic digestion of dietary fats such as milk fat globules enriched in long-chain triglycerides. Hydrolyzes short-, medium- and long-chain fatty acyls in triglycerides without apparent positional specificity. Can completely deacylate triacylglycerols. When the liver matures and bile salt synthesis increases, likely functions mainly as a galactolipase and monoacylglycerol lipase. Hydrolyzes monogalactosyldiglycerols (MGDG) and digalactosyldiacylglycerols (DGDG) present in a plant-based diet, releasing long-chain polyunsaturated fatty acids. Hydrolyzes medium- and long-chain fatty acyls in galactolipids. May act together with LIPF to hydrolyze partially digested triglycerides. Hydrolyzes long-chain monoglycerides with high efficiency. In cytotoxic T cells, contributes to perforin-dependent cell lysis, but is unlikely to mediate direct cytotoxicity. Also has low phospholipase activity. In neurons, required for the localization of the phospholipid 1-oleoyl-2-palmitoyl-PC (OPPC) to neurite tips through acyl chain remodeling of membrane phospholipids. The resulting OPPC-rich lipid membrane domain recruits the t-SNARE protein STX4 by selectively interacting with the STX4 transmembrane domain and this promotes surface expression of the dopamine transporter SLC6A3/DAT at neurite tips by facilitating fusion of SLC6A3-containing transport vesicles with the plasma membrane. The polypeptide is Pancreatic lipase-related protein 2 (Bos taurus (Bovine)).